The sequence spans 170 residues: Ribosome maturation factor RimM (170 aa).

The region spanning 97–170 (HPDEYYWVDL…RIVVDWDPEF (74 aa)) is the PRC barrel domain.

It belongs to the RimM family. Binds ribosomal protein uS19.

It is found in the cytoplasm. Its function is as follows. An accessory protein needed during the final step in the assembly of 30S ribosomal subunit, possibly for assembly of the head region. Essential for efficient processing of 16S rRNA. May be needed both before and after RbfA during the maturation of 16S rRNA. It has affinity for free ribosomal 30S subunits but not for 70S ribosomes. The sequence is that of Ribosome maturation factor RimM from Xylella fastidiosa (strain M23).